Reading from the N-terminus, the 675-residue chain is Protein C-mannosyl-transferase DPY19L1 (675 aa).

Positions 1–22 (MEGRPPPEGRPPPRPRTGRAPR) are disordered. 11 helical membrane passes run 66–88 (LYYS…WMIM), 156–176 (ACFY…LFFI), 186–208 (LGGL…VMWT), 236–254 (LYRG…FMLP), 260–279 (FVLL…GYID), 286–303 (IIYI…LMFG), 309–325 (TSYY…ILAM), 334–354 (VSEL…TVIL), 414–434 (VVLV…WGVL), 449–469 (GELV…ILIM), and 491–511 (LFGW…ILAA).

It belongs to the dpy-19 family. In terms of tissue distribution, widely expressed.

It is found in the endoplasmic reticulum membrane. It catalyses the reaction L-tryptophyl-[protein] + a di-trans,poly-cis-dolichyl beta-D-mannosyl phosphate = C-alpha-D-mannosyl-L-tryptophyl-[protein] + a di-trans,poly-cis-dolichyl phosphate + H(+). It functions in the pathway protein modification; protein glycosylation. C-mannosyltransferase that mediates the C-mannosylation tryptophan residues on target proteins. The reaction occurs on the luminal side of the endoplasmic reticulum and involves the transfer of a mannose unit from a dolichylphosphate mannose (Dol-P-Man) donor to an acceptor protein containing a WxxW consensus sequence. C-mannosylates the first two tryptophans in the WxxWxxWxxC motif in thrombospondin (TSP) type-1 of UNC5A. Regulates neurite extension during development. The polypeptide is Protein C-mannosyl-transferase DPY19L1 (DPY19L1) (Homo sapiens (Human)).